The chain runs to 338 residues: GTPase Obg (338 aa).

The region spanning 1–159 is the Obg domain; it reads MQFIDQAEIE…RRIRLELKLL (159 aa). Positions 160–328 constitute an OBG-type G domain; it reads AEVGIIGLPN…MLQATWEQLD (169 aa). Residues 166-173, 191-195, 213-216, 280-283, and 309-311 each bind GTP; these read GLPNAGKS, FTTLI, DIPG, NKLD, and SAV. Positions 173 and 193 each coordinate Mg(2+).

Belongs to the TRAFAC class OBG-HflX-like GTPase superfamily. OBG GTPase family. As to quaternary structure, monomer. Requires Mg(2+) as cofactor.

It is found in the cytoplasm. In terms of biological role, an essential GTPase which binds GTP, GDP and possibly (p)ppGpp with moderate affinity, with high nucleotide exchange rates and a fairly low GTP hydrolysis rate. Plays a role in control of the cell cycle, stress response, ribosome biogenesis and in those bacteria that undergo differentiation, in morphogenesis control. The sequence is that of GTPase Obg from Gloeothece citriformis (strain PCC 7424) (Cyanothece sp. (strain PCC 7424)).